The sequence spans 293 residues: 4-hydroxybenzoate octaprenyltransferase (293 aa).

8 consecutive transmembrane segments (helical) span residues 19–39 (PIGILLLLWPTLWAQWLASNG), 43–63 (WLILWIFVMGVVLMRSAGCVV), 95–115 (LLAAGLSLLAFLLILPLNALV), 135–155 (FFAIPQAYLGVAFGFGIPMSY), 158–178 (LWGEVPAEAWLLLAANVFWAI), 209–229 (LTAIAFCYAATLALLAWVGAL), 231–251 (DFSGWYYAGLAAAGAIAVYHL), and 266–286 (FLHNTWFGAAVFGGIVLHFLL).

It belongs to the UbiA prenyltransferase family. The cofactor is Mg(2+).

The protein resides in the cell inner membrane. It carries out the reaction all-trans-octaprenyl diphosphate + 4-hydroxybenzoate = 4-hydroxy-3-(all-trans-octaprenyl)benzoate + diphosphate. Its pathway is cofactor biosynthesis; ubiquinone biosynthesis. Functionally, catalyzes the prenylation of para-hydroxybenzoate (PHB) with an all-trans polyprenyl group. Mediates the second step in the final reaction sequence of ubiquinone-8 (UQ-8) biosynthesis, which is the condensation of the polyisoprenoid side chain with PHB, generating the first membrane-bound Q intermediate 3-octaprenyl-4-hydroxybenzoate. The polypeptide is 4-hydroxybenzoate octaprenyltransferase (Thiobacillus denitrificans (strain ATCC 25259 / T1)).